Reading from the N-terminus, the 205-residue chain is Gap junction epsilon-1 protein (205 aa).

Topologically, residues 1–23 are cytoplasmic; it reads MSLNYIKNFYEGCVKPPTVIGQF. The chain crosses the membrane as a helical span at residues 24-44; that stretch reads HTLFFGSIRIFFLGVLGFAVY. Residues 45–76 lie on the Extracellular side of the membrane; the sequence is GNEALHFICDPDKREVNLFCYNQFRPITPQVS. Cystine bridges form between Cys-53/Cys-161 and Cys-64/Cys-148. The chain crosses the membrane as a helical span at residues 77–97; that stretch reads FSALQLVIVLVPGALFHLYAA. The Cytoplasmic portion of the chain corresponds to 98 to 112; sequence CKSINQECILQKPIY. A helical transmembrane segment spans residues 113–133; that stretch reads TIIYILSVLLRISLAAIAFWL. The Extracellular segment spans residues 134–170; that stretch reads QIYLFGFQVKSLYLCDARSLGENMIIRCMVPEHFEKT. Residues 171–191 traverse the membrane as a helical segment; it reads IFLIAINTFTTITILLFVAEI. Over 192 to 205 the chain is Cytoplasmic; the sequence is FEIIFRRLYFPFRQ.

It belongs to the connexin family. Beta-type (group I) subfamily. In terms of assembly, a connexon is composed of a hexamer of connexins. Not detected in lens or retina.

It localises to the cell membrane. Mediates calcium-independent ATP release, suggesting activity as a hemichannel. Does not form functional gap junctions. In Homo sapiens (Human), this protein is Gap junction epsilon-1 protein (GJE1).